The chain runs to 57 residues: Large ribosomal subunit protein bL32c (57 aa).

Component of the chloroplast large ribosomal subunit (LSU). Mature 70S chloroplast ribosomes of higher plants consist of a small (30S) and a large (50S) subunit. The 30S small subunit contains 1 molecule of ribosomal RNA (16S rRNA) and 24 different proteins. The 50S large subunit contains 3 rRNA molecules (23S, 5S and 4.5S rRNA) and 33 different proteins.

It is found in the plastid. Its subcellular location is the chloroplast. Functionally, component of the chloroplast ribosome (chloro-ribosome), a dedicated translation machinery responsible for the synthesis of chloroplast genome-encoded proteins, including proteins of the transcription and translation machinery and components of the photosynthetic apparatus. The chain is Large ribosomal subunit protein bL32c (rpl32) from Spinacia oleracea (Spinach).